The primary structure comprises 331 residues: Lipoyl synthase (331 aa).

Residues Cys74, Cys79, Cys85, Cys100, Cys104, Cys107, and Ser314 each coordinate [4Fe-4S] cluster. The Radical SAM core domain occupies 85–303 (CFGKGTATFM…ETEAYKMGFT (219 aa)).

This sequence belongs to the radical SAM superfamily. Lipoyl synthase family. [4Fe-4S] cluster serves as cofactor.

It is found in the cytoplasm. The enzyme catalyses [[Fe-S] cluster scaffold protein carrying a second [4Fe-4S](2+) cluster] + N(6)-octanoyl-L-lysyl-[protein] + 2 oxidized [2Fe-2S]-[ferredoxin] + 2 S-adenosyl-L-methionine + 4 H(+) = [[Fe-S] cluster scaffold protein] + N(6)-[(R)-dihydrolipoyl]-L-lysyl-[protein] + 4 Fe(3+) + 2 hydrogen sulfide + 2 5'-deoxyadenosine + 2 L-methionine + 2 reduced [2Fe-2S]-[ferredoxin]. It participates in protein modification; protein lipoylation via endogenous pathway; protein N(6)-(lipoyl)lysine from octanoyl-[acyl-carrier-protein]: step 2/2. Catalyzes the radical-mediated insertion of two sulfur atoms into the C-6 and C-8 positions of the octanoyl moiety bound to the lipoyl domains of lipoate-dependent enzymes, thereby converting the octanoylated domains into lipoylated derivatives. The sequence is that of Lipoyl synthase from Leptothrix cholodnii (strain ATCC 51168 / LMG 8142 / SP-6) (Leptothrix discophora (strain SP-6)).